Reading from the N-terminus, the 250-residue chain is Thiamine thiazole synthase (250 aa).

NAD(+)-binding positions include serine 36, 55 to 56, glycine 63, valine 126, and 152 to 154; these read EE and HVD. Aspartate 154 and histidine 169 together coordinate Fe cation. Methionine 216 serves as a coordination point for NAD(+). Arginine 226 is a glycine binding site.

The protein belongs to the THI4 family. Homooctamer; tetramer of dimers. The cofactor is Fe(2+).

The enzyme catalyses hydrogen sulfide + glycine + NAD(+) = ADP-5-ethyl-4-methylthiazole-2-carboxylate + nicotinamide + 3 H2O + H(+). Its pathway is cofactor biosynthesis; thiamine diphosphate biosynthesis. Functionally, involved in the biosynthesis of the thiazole moiety of thiamine. Catalyzes the conversion of NAD and glycine to adenosine diphosphate 5-(2-hydroxyethyl)-4-methylthiazole-2-carboxylate (ADT), an adenylated thiazole intermediate, using free sulfide as a source of sulfur. The polypeptide is Thiamine thiazole synthase (Thermotoga maritima (strain ATCC 43589 / DSM 3109 / JCM 10099 / NBRC 100826 / MSB8)).